A 741-amino-acid polypeptide reads, in one-letter code: Pentatricopeptide repeat-containing protein At1g08070, chloroplastic (741 aa).

PPR repeat units lie at residues 98 to 132, 133 to 167, 168 to 202, 203 to 229, 230 to 264, 265 to 299, 300 to 330, 331 to 365, 366 to 396, 403 to 433, 434 to 468, 469 to 499, and 505 to 535; these read NLLIWNTMFRGHALSSDPVSALKLYVCMISLGLLP, NSYTFPFVLKSCAKSKAFKEGQQIHGHVLKLGCDL, DLYVHTSLISMYVQNGRLEDAHKVFDKSPHRDVVS, YTALIKGYASRGYIENAQKLFDEIPVK, DVVSWNAMISGYAETGNYKEALELFKDMMKTNVRP, DESTMVTVVSACAQSGSIELGRQVHLWIDDHGFGS, NLKIVNALIDLYSKCGELETACGLFERLPYK, DVISWNTLIGGYTHMNLYKEALLLFQEMLRSGETP, NDVTMLSILPACAHLGAIDIGRWIHVYIDKR, ASSLRTSLIDMYAKCGDIEAAHQVFNSILHK, SLSSWNAMIFGFAMHGRADASFDLFSRMRKIGIQP, DDITFVGLLSACSHSGMLDLGRHIFRTMTQD, and KLEHYGCMIDLLGHSGLFKEAEEMINMMEME. The type E motif stretch occupies residues 540 to 615; sequence IWCSLLKACK…VPGCSSIEID (76 aa). The segment at 616–646 is type E(+) motif; the sequence is SVVHEFIIGDKFHPRNREIYGMLEEMEVLLE. Positions 647-741 are type DYW motif; that stretch reads KAGFVPDTSE…DGVCSCNDYW (95 aa).

It belongs to the PPR family. PCMP-H subfamily. As to quaternary structure, interacts with ORRM1. Interacts with VAR3/OZ1.

The protein localises to the plastid. The protein resides in the chloroplast. Involved in multiple sites RNA editing events in chloroplasts. Involved in the editing of the site 9 of ndhB (ndhB-9) and site 1 of ndhG (ndhG-1) transcripts, which are two plastid-encoded subunits of the chloroplast NAD(P)H dehydrogenase (NDH) complex. Not essential for the activity of the NDH complex of the photosynthetic electron transport chain. The chain is Pentatricopeptide repeat-containing protein At1g08070, chloroplastic (PCMP-H12) from Arabidopsis thaliana (Mouse-ear cress).